Here is a 487-residue protein sequence, read N- to C-terminus: Structure-specific endonuclease subunit SLX1 (487 aa).

The GIY-YIG domain maps to 27–109 (PFYACYLLRS…QKPELSRHLR (83 aa)). The segment at 44–69 (RTYVGSTPDPPRRIRQHNGELKQGAW) is disordered. The SLX1-type zinc-finger motif lies at 262 to 328 (CHLCQERIAF…LPYQGLCPNC (67 aa)). The segment covering 359–396 (KAEKAEKAEKAEKAEKAEKAEKAGRKVRQREMKTKKGD) has biased composition (basic and acidic residues). Disordered regions lie at residues 359–407 (KAEK…QPES) and 433–475 (PARS…SEPE). The segment covering 397-407 (QSNGTVAQPES) has biased composition (polar residues). The segment covering 438-455 (KSKDVGGEGIRHSTHTDD) has biased composition (basic and acidic residues). A compositionally biased stretch (acidic residues) spans 465–475 (ETEDESESEPE).

Belongs to the SLX1 family. As to quaternary structure, forms a heterodimer with SLX4. A divalent metal cation serves as cofactor.

The protein resides in the nucleus. Its function is as follows. Catalytic subunit of the SLX1-SLX4 structure-specific endonuclease that resolves DNA secondary structures generated during DNA repair and recombination. Has endonuclease activity towards branched DNA substrates, introducing single-strand cuts in duplex DNA close to junctions with ss-DNA. The chain is Structure-specific endonuclease subunit SLX1 from Cryptococcus neoformans var. neoformans serotype D (strain B-3501A) (Filobasidiella neoformans).